The following is a 958-amino-acid chain: Coiled-coil domain-containing protein 187 (958 aa).

The span at 116-132 (SSVSSGRMSGSSGGHES) shows a compositional bias: low complexity. Disordered regions lie at residues 116–160 (SSVS…SDPR), 345–447 (ELTR…PRFF), 470–492 (QDIS…QRPW), and 510–602 (EPSP…KAQA). Polar residues-rich tracts occupy residues 374–398 (LQST…NSSL) and 470–491 (QDIS…SQRP). The span at 536–545 (SSPSSKGKSA) shows a compositional bias: low complexity. The stretch at 718-743 (KQARLQALETMAEALRQRVDILTTKL) forms a coiled coil. The segment at 916 to 958 (EVKKEGLVTPWTTRSCGKGEPADRPWAGWSGGQGGLPWASSTA) is disordered.

The protein is Coiled-coil domain-containing protein 187 of Mus musculus (Mouse).